The sequence spans 426 residues: Serine--tRNA ligase (426 aa).

L-serine is bound at residue 235–237 (TAE). 266–268 (RRE) contributes to the ATP binding site. E289 serves as a coordination point for L-serine. 353-356 (EISS) contacts ATP. S389 contacts L-serine.

Belongs to the class-II aminoacyl-tRNA synthetase family. Type-1 seryl-tRNA synthetase subfamily. Homodimer. The tRNA molecule binds across the dimer.

Its subcellular location is the cytoplasm. It carries out the reaction tRNA(Ser) + L-serine + ATP = L-seryl-tRNA(Ser) + AMP + diphosphate + H(+). The catalysed reaction is tRNA(Sec) + L-serine + ATP = L-seryl-tRNA(Sec) + AMP + diphosphate + H(+). Its pathway is aminoacyl-tRNA biosynthesis; selenocysteinyl-tRNA(Sec) biosynthesis; L-seryl-tRNA(Sec) from L-serine and tRNA(Sec): step 1/1. Catalyzes the attachment of serine to tRNA(Ser). Is also able to aminoacylate tRNA(Sec) with serine, to form the misacylated tRNA L-seryl-tRNA(Sec), which will be further converted into selenocysteinyl-tRNA(Sec). The polypeptide is Serine--tRNA ligase (Trichormus variabilis (strain ATCC 29413 / PCC 7937) (Anabaena variabilis)).